A 264-amino-acid polypeptide reads, in one-letter code: 3-methyl-2-oxobutanoate hydroxymethyltransferase (264 aa).

The Mg(2+) site is built by Asp-45 and Asp-84. Residues 45 to 46 (DS), Asp-84, and Lys-112 contribute to the 3-methyl-2-oxobutanoate site. A Mg(2+)-binding site is contributed by Glu-114. The active-site Proton acceptor is Glu-181.

Belongs to the PanB family. As to quaternary structure, homodecamer; pentamer of dimers. It depends on Mg(2+) as a cofactor.

It is found in the cytoplasm. The catalysed reaction is 3-methyl-2-oxobutanoate + (6R)-5,10-methylene-5,6,7,8-tetrahydrofolate + H2O = 2-dehydropantoate + (6S)-5,6,7,8-tetrahydrofolate. The protein operates within cofactor biosynthesis; (R)-pantothenate biosynthesis; (R)-pantoate from 3-methyl-2-oxobutanoate: step 1/2. Functionally, catalyzes the reversible reaction in which hydroxymethyl group from 5,10-methylenetetrahydrofolate is transferred onto alpha-ketoisovalerate to form ketopantoate. This Shewanella denitrificans (strain OS217 / ATCC BAA-1090 / DSM 15013) protein is 3-methyl-2-oxobutanoate hydroxymethyltransferase.